The sequence spans 1016 residues: Vacuolar membrane protease (1016 aa).

Positions 1-36 are disordered; the sequence is MAETESGTGNSPSHRLSETSNASGNRSHQQSKQIAS. At 1 to 57 the chain is on the cytoplasmic side; that stretch reads MAETESGTGNSPSHRLSETSNASGNRSHQQSKQIASYKSSKPNVFIRFIRAIFGYRK. The helical transmembrane segment at 58–78 threads the bilayer; that stretch reads TSVTLFVFITIIATLILVELS. Residues 79–408 lie on the Vacuolar side of the membrane; that stretch reads NSLDFSVKLP…FVIPASQLVL (330 aa). Asn-147 and Asn-177 each carry an N-linked (GlcNAc...) asparagine glycan. His-191 and Asp-203 together coordinate Zn(2+). Residue Glu-238 is the Proton acceptor of the active site. Zn(2+) contacts are provided by Glu-239, Glu-264, and His-337. The helical transmembrane segment at 409–429 threads the bilayer; that stretch reads INVTCLAVIPLISLPLLVIIF. Topologically, residues 430-438 are cytoplasmic; that stretch reads NYKKNWHIG. The chain crosses the membrane as a helical span at residues 439–459; sequence FINAIKFPVSLVLSICILNII. The Vacuolar segment spans residues 460-481; sequence THNVIASINEFLPNSSYDSIVS. Asn-473 carries N-linked (GlcNAc...) asparagine glycosylation. The helical transmembrane segment at 482 to 502 threads the bilayer; it reads TLYSLFLLLNYLFLNGINFIF. The Cytoplasmic segment spans residues 503 to 511; that stretch reads KGYKGLYHD. Residues 512 to 532 form a helical membrane-spanning segment; that stretch reads EKLILIIQTSFIYWVLLIVST. The Vacuolar portion of the chain corresponds to 533–547; that stretch reads NKLSKNKIGNDHTGE. The chain crosses the membrane as a helical span at residues 548-568; it reads FPLIMLFLLQSIGALFGLFSW. The Cytoplasmic portion of the chain corresponds to 569-646; sequence SFKKTTPDEL…SFSYDWSIQY (78 aa). Residues 598 to 622 are disordered; it reads YGSNEAELESGEPISSNSSVSLNSS. Residues 612 to 622 are compositionally biased toward low complexity; that stretch reads SSNSSVSLNSS. The chain crosses the membrane as a helical span at residues 647–667; sequence VVIVPLSSLIVYNTGSLLLSG. Topologically, residues 668 to 681 are vacuolar; that stretch reads LNKSIQESLNAEKL. The N-linked (GlcNAc...) asparagine glycan is linked to Asn-669. The helical transmembrane segment at 682–702 threads the bilayer; sequence IFDLIQLVAVTLAIPFLPFIF. Residues 703-706 lie on the Cytoplasmic side of the membrane; the sequence is KINR. A helical transmembrane segment spans residues 707 to 727; sequence LLVTALVLVFCSGFISIFLKS. Over 728-1016 the chain is Vacuolar; it reads PFDQLNPLKL…LVSVSKYVEI (289 aa). N-linked (GlcNAc...) asparagine glycans are attached at residues Asn-778, Asn-821, Asn-850, Asn-875, and Asn-977.

This sequence belongs to the peptidase M28 family. Zn(2+) serves as cofactor.

Its subcellular location is the vacuole membrane. In terms of biological role, may be involved in vacuolar sorting and osmoregulation. The sequence is that of Vacuolar membrane protease from Debaryomyces hansenii (strain ATCC 36239 / CBS 767 / BCRC 21394 / JCM 1990 / NBRC 0083 / IGC 2968) (Yeast).